A 398-amino-acid polypeptide reads, in one-letter code: Acetate kinase (398 aa).

Asn8 lines the Mg(2+) pocket. Lys15 is a binding site for ATP. Arg92 serves as a coordination point for substrate. The active-site Proton donor/acceptor is the Asp149. ATP contacts are provided by residues 209–213 (HLGNG), 283–285 (DFR), and 331–335 (GVGEN). Glu385 contributes to the Mg(2+) binding site.

It belongs to the acetokinase family. In terms of assembly, homodimer. Requires Mg(2+) as cofactor. Mn(2+) is required as a cofactor.

The protein localises to the cytoplasm. It carries out the reaction acetate + ATP = acetyl phosphate + ADP. It participates in metabolic intermediate biosynthesis; acetyl-CoA biosynthesis; acetyl-CoA from acetate: step 1/2. Functionally, catalyzes the formation of acetyl phosphate from acetate and ATP. Can also catalyze the reverse reaction. In Corynebacterium efficiens (strain DSM 44549 / YS-314 / AJ 12310 / JCM 11189 / NBRC 100395), this protein is Acetate kinase.